The sequence spans 316 residues: Protein lifeguard 2 (316 aa).

Positions 1 to 49 (MTQGKLSVANKAPGTEGQQQANGEKKDAPAVPSAPPSYEEATSGEGLKA) are disordered. The next 3 membrane-spanning stretches (helical) occupy residues 106 to 126 (VYTI…LFTF), 138 to 158 (PGWY…LACC), and 165 to 185 (FPWN…LTGM). The N-linked (GlcNAc...) asparagine glycan is linked to Asn191. 4 consecutive transmembrane segments (helical) span residues 194-214 (SVLL…IFSF), 225-245 (GVLF…AILL), 251-271 (PWLH…FLAF), and 290-310 (IFGA…FLQL).

Belongs to the BI1 family. LFG subfamily. Interacts with FAS/TNFRSF6 and BAX. In terms of tissue distribution, expressed at high levels on dendrites and to a lesser extent on the soma and axons of neurons in various regions of brain.

The protein localises to the cell membrane. The protein resides in the membrane raft. It localises to the postsynaptic cell membrane. Functionally, antiapoptotic protein which protects cells uniquely from Fas-induced apoptosis. Regulates Fas-mediated apoptosis in neurons by interfering with caspase-8 activation. Plays a role in cerebellar development by affecting cerebellar size, internal granular layer (IGL) thickness, and Purkinje cell (PC) development. This chain is Protein lifeguard 2 (Faim2), found in Rattus norvegicus (Rat).